An 861-amino-acid chain; its full sequence is Replication factor C subunit 1 (861 aa).

The segment at 1–103 is disordered; it reads MVNISDFFGK…SSKSSDSASN (103 aa). Residues 16 to 28 show a composition bias toward polar residues; the sequence is RSSTSRPTRQVGS. Position 38 is a phosphothreonine (T38). Position 40 is a phosphoserine (S40). Residue T63 is modified to Phosphothreonine. The BRCT domain maps to 153-243; the sequence is GKPNCLLGLT…PAEGGDGEAA (91 aa). Residues T299, C311, 353-361, and N456 each bind ATP; that span reads GPPGIGKTT. The interval 788 to 861 is disordered; sequence STIGGGGVGT…GGSKKRKTKA (74 aa). The span at 803–823 shows a compositional bias: acidic residues; it reads DFEDVVDADDNPVPADDEETQ. 2 short sequence motifs (nuclear localization signal) span residues 830–834 and 855–860; these read KKDKL and KKRKTK. A compositionally biased stretch (basic residues) spans 836–861; it reads KQKAKPTKRKTATSKPGGSKKRKTKA.

Belongs to the activator 1 large subunit family. Replication factor C (RFC) is a heteropentamer of subunits RFC1, RFC2, RFC3, RFC4 and RFC5 and forms a complex with POL30/PCNA in the presence of ATP. Interacts with ECO1 and POL30/PCNA.

It is found in the nucleus. Functionally, component of the ATP-dependent clamp loader RFC complex for the POL30/PCNA homotrimer DNA clamp. During a clamp loading circle, the RFC:clamp complex binds to DNA and the recognition of the double-stranded/single-stranded junction stimulates ATP hydrolysis by RFC. The complex presumably provides bipartite ATP sites in which one subunit supplies a catalytic site for hydrolysis of ATP bound to the neighboring subunit. Dissociation of RFC from the clamp leaves the clamp encircling DNA. Replication factor C (RFC or activator 1) complex acts during elongation of primed DNA templates by DNA polymerase delta and epsilon. RFC has an essential but redundant activity in sister chromatid cohesion establishment. The polypeptide is Replication factor C subunit 1 (RFC1) (Saccharomyces cerevisiae (strain ATCC 204508 / S288c) (Baker's yeast)).